The following is an 88-amino-acid chain: Small ribosomal subunit protein bS16 (88 aa).

It belongs to the bacterial ribosomal protein bS16 family.

The chain is Small ribosomal subunit protein bS16 from Mesomycoplasma hyopneumoniae (strain 232) (Mycoplasma hyopneumoniae).